The sequence spans 193 residues: UPF0215 protein PH0071 (193 aa).

Belongs to the UPF0215 family.

This is UPF0215 protein PH0071 from Pyrococcus horikoshii (strain ATCC 700860 / DSM 12428 / JCM 9974 / NBRC 100139 / OT-3).